The following is an 815-amino-acid chain: Protein-glutamine gamma-glutamyltransferase K (815 aa).

Disordered regions lie at residues Met1–Gly40 and Asp59–Asp100. A compositionally biased stretch (pro residues) spans Trp16–Glu25. Thr21 carries the phosphothreonine modification. 5 positions are modified to phosphoserine: Ser23, Ser80, Ser83, Ser90, and Ser93. Residues Asp59–Arg87 show a composition bias toward basic and acidic residues. Active-site residues include Cys375, His434, and Asp457. Positions 497, 499, 546, and 551 each coordinate Ca(2+). The tract at residues Ser795 to Ala815 is disordered.

Belongs to the transglutaminase superfamily. Transglutaminase family. In terms of assembly, interacts with PLAAT4. The cofactor is Ca(2+). Palmitoylated. In terms of processing, the membrane anchorage region possesses a cluster of five cysteines within which fatty acid(s) may become thioester-linked. It is subject to phorbol ester-stimulated phosphorylation and is hypersensitive to proteolysis, which releases the enzyme in a soluble form. Post-translationally, tyrosine-phosphorylated.

It localises to the membrane. It catalyses the reaction L-glutaminyl-[protein] + L-lysyl-[protein] = [protein]-L-lysyl-N(6)-5-L-glutamyl-[protein] + NH4(+). Its function is as follows. Catalyzes the cross-linking of proteins and the conjugation of polyamines to proteins. Responsible for cross-linking epidermal proteins during formation of the stratum corneum. Involved in cell proliferation. This chain is Protein-glutamine gamma-glutamyltransferase K (TGM1), found in Canis lupus familiaris (Dog).